The sequence spans 447 residues: Argininosuccinate synthase (447 aa).

ATP is bound by residues 17 to 25 (AFSGGLDTS) and Ala-43. Tyr-99 is a binding site for L-citrulline. Residues Gly-129 and Thr-131 each coordinate ATP. Residues Thr-131, Asn-135, and Asp-136 each coordinate L-aspartate. Asn-135 lines the L-citrulline pocket. Asp-136 serves as a coordination point for ATP. L-citrulline contacts are provided by Arg-139 and Ser-192. Asp-194 is an ATP binding site. The L-citrulline site is built by Thr-201, Glu-203, and Glu-280.

It belongs to the argininosuccinate synthase family. Type 2 subfamily. In terms of assembly, homotetramer.

The protein resides in the cytoplasm. The enzyme catalyses L-citrulline + L-aspartate + ATP = 2-(N(omega)-L-arginino)succinate + AMP + diphosphate + H(+). It participates in amino-acid biosynthesis; L-arginine biosynthesis; L-arginine from L-ornithine and carbamoyl phosphate: step 2/3. This chain is Argininosuccinate synthase, found in Salmonella schwarzengrund (strain CVM19633).